A 205-amino-acid polypeptide reads, in one-letter code: Probable anaerobic dimethyl sulfoxide reductase chain YnfG (205 aa).

4Fe-4S ferredoxin-type domains lie at 5–33, 59–89, and 90–119; these read YGFFIDSSRCTGCKTCELACKDFKDLGPE, FAYYLSISCNHCDDPACTKVCPSGAMHKRED, and GFVVVDEDVCIGCRYCHMACPYGAPQYNAE. The [4Fe-4S] cluster site is built by cysteine 14, cysteine 17, cysteine 20, cysteine 24, cysteine 67, cysteine 70, cysteine 75, cysteine 79, cysteine 99, cysteine 102, cysteine 105, cysteine 109, cysteine 126, cysteine 129, cysteine 141, and cysteine 145. Positions 183–205 are disordered; it reads IKPNANSRPTGDTTGYLANPEEV. Residues 186 to 195 are compositionally biased toward polar residues; that stretch reads NANSRPTGDT.

As to quaternary structure, the complex consists of three subunits: YnfF, the reductase; YnfG, an electron transfer protein, and YnfH, a membrane anchor protein. [4Fe-4S] cluster serves as cofactor.

Electron transfer subunit of the terminal reductase during anaerobic growth on various sulfoxide and N-oxide compounds. This is Probable anaerobic dimethyl sulfoxide reductase chain YnfG (ynfG) from Escherichia coli O6:H1 (strain CFT073 / ATCC 700928 / UPEC).